A 339-amino-acid polypeptide reads, in one-letter code: Glyceraldehyde-3-phosphate dehydrogenase (339 aa).

Residues 12–13, Asp34, Arg78, and Thr120 each bind NAD(+); that span reads RI. D-glyceraldehyde 3-phosphate-binding positions include 149-151, Thr180, 209-210, and Arg232; these read SCT and TG. Cys150 serves as the catalytic Nucleophile. Asn319 provides a ligand contact to NAD(+).

It belongs to the glyceraldehyde-3-phosphate dehydrogenase family. As to quaternary structure, homotetramer.

Its subcellular location is the cytoplasm. The enzyme catalyses D-glyceraldehyde 3-phosphate + phosphate + NAD(+) = (2R)-3-phospho-glyceroyl phosphate + NADH + H(+). It functions in the pathway carbohydrate degradation; glycolysis; pyruvate from D-glyceraldehyde 3-phosphate: step 1/5. Its function is as follows. Catalyzes the oxidative phosphorylation of glyceraldehyde 3-phosphate (G3P) to 1,3-bisphosphoglycerate (BPG) using the cofactor NAD. The first reaction step involves the formation of a hemiacetal intermediate between G3P and a cysteine residue, and this hemiacetal intermediate is then oxidized to a thioester, with concomitant reduction of NAD to NADH. The reduced NADH is then exchanged with the second NAD, and the thioester is attacked by a nucleophilic inorganic phosphate to produce BPG. The protein is Glyceraldehyde-3-phosphate dehydrogenase (gapA) of Haemophilus influenzae (strain ATCC 51907 / DSM 11121 / KW20 / Rd).